Consider the following 241-residue polypeptide: Small ribosomal subunit protein uS3 (241 aa).

Residues 39–109 (IRQYITKNLS…QIRINVIEVQ (71 aa)) form the KH type-2 domain. The disordered stretch occupies residues 214-241 (EEIPMPVPSQTPRRQRRRQQFEDRSGEE). A compositionally biased stretch (basic and acidic residues) spans 232–241 (QQFEDRSGEE).

It belongs to the universal ribosomal protein uS3 family. In terms of assembly, part of the 30S ribosomal subunit. Forms a tight complex with proteins S10 and S14.

In terms of biological role, binds the lower part of the 30S subunit head. Binds mRNA in the 70S ribosome, positioning it for translation. This Rippkaea orientalis (strain PCC 8801 / RF-1) (Cyanothece sp. (strain PCC 8801)) protein is Small ribosomal subunit protein uS3.